We begin with the raw amino-acid sequence, 108 residues long: Nucleoid-associated protein BPP1222 (108 aa).

The segment at 86–108 (TSQEKMASVTAGMPLPPGMKLPF) is disordered. Over residues 99–108 (PLPPGMKLPF) the composition is skewed to pro residues.

It belongs to the YbaB/EbfC family. Homodimer.

It is found in the cytoplasm. The protein resides in the nucleoid. Binds to DNA and alters its conformation. May be involved in regulation of gene expression, nucleoid organization and DNA protection. This chain is Nucleoid-associated protein BPP1222, found in Bordetella parapertussis (strain 12822 / ATCC BAA-587 / NCTC 13253).